The following is a 159-amino-acid chain: Probable cyclic pyranopterin monophosphate synthase (159 aa).

Residues L75–H77 and M111–E112 each bind substrate. D126 is a catalytic residue.

This sequence belongs to the MoaC family. Homohexamer; trimer of dimers.

The catalysed reaction is (8S)-3',8-cyclo-7,8-dihydroguanosine 5'-triphosphate = cyclic pyranopterin phosphate + diphosphate. The protein operates within cofactor biosynthesis; molybdopterin biosynthesis. Catalyzes the conversion of (8S)-3',8-cyclo-7,8-dihydroguanosine 5'-triphosphate to cyclic pyranopterin monophosphate (cPMP). The sequence is that of Probable cyclic pyranopterin monophosphate synthase from Pyrococcus horikoshii (strain ATCC 700860 / DSM 12428 / JCM 9974 / NBRC 100139 / OT-3).